We begin with the raw amino-acid sequence, 445 residues long: Methylenetetrahydrofolate--tRNA-(uracil-5-)-methyltransferase TrmFO (445 aa).

9 to 14 (GGGLAG) provides a ligand contact to FAD.

The protein belongs to the MnmG family. TrmFO subfamily. FAD serves as cofactor.

Its subcellular location is the cytoplasm. It catalyses the reaction uridine(54) in tRNA + (6R)-5,10-methylene-5,6,7,8-tetrahydrofolate + NADH + H(+) = 5-methyluridine(54) in tRNA + (6S)-5,6,7,8-tetrahydrofolate + NAD(+). It carries out the reaction uridine(54) in tRNA + (6R)-5,10-methylene-5,6,7,8-tetrahydrofolate + NADPH + H(+) = 5-methyluridine(54) in tRNA + (6S)-5,6,7,8-tetrahydrofolate + NADP(+). In terms of biological role, catalyzes the folate-dependent formation of 5-methyl-uridine at position 54 (M-5-U54) in all tRNAs. The protein is Methylenetetrahydrofolate--tRNA-(uracil-5-)-methyltransferase TrmFO of Rhizorhabdus wittichii (strain DSM 6014 / CCUG 31198 / JCM 15750 / NBRC 105917 / EY 4224 / RW1) (Sphingomonas wittichii).